We begin with the raw amino-acid sequence, 1071 residues long: MLRDGKNEGMSTIPGFNQIQFEGFCRFIDQGLTEELYKFPKIEDTDQEIEFQLFVETYQLVEPLIKERDAVYESLTYSSELYVSAGLIWKTGRDMQEQTIFFGNIPLMNSLGTSIVNGIYRIVINQVLQSPGIYYRSELDHNGISVYTGTIISDWGGRSELEIDRKARIWARVSRKQKISILVLSSAMGSNLREILENVCYPEIFLSFLTDKEKKKIGSKENAILEFYQQFACVGGDPVFSESLCKELQKKFFQQRCELGRIGRRNMNRRLNLDISQNNTFLLPRDILAAADHLIGMKFGMGTLDDMNHLKNKRIRSVADLLQDQFGLALVRLENVVRGTICGALRHKLIPTPQNLVTSTPLTTTYESFFGLHPLSQVLDRTNPLTQIVHGRKLSYLGPGGLTGRTASFRIRDIHPSHYGRICPIDTSEGINVGLIGSLAIHARIGRWGSLESPFYEISERSKGARMLYLSPGKDEYYMVAAGNSLALNQGIQEEQVVPARYRQEFLTIAWEQVHLRSIFSFQYFSIGASLIPFIEHNDANRALMSSNMQRQAVPLSRSEKCIVGTGLERQAAIDSGALAIAEHEGKIIYTDTDKILLSGNGNTLSIPLVIYQRSNKNTCMHQKPQVQRGKCIKKGQILAHGAATVGGELALGKNVLVAYMPWEGYNFEDAVLISERLVYEDIYTSFHIRKYEIKTHVTSQGPERVTNEIPHLEAHLLRNLDKNGIVMLGSWVETGDILVGKLTPQMVKESSYAPEDRLLRAILGIQVSTSKETCLKLPIGGRGRVIDVRWIQKRGGSSYNPEMIRVYISQKREIKVGDKVAGRHGNKGIISKILPRQDMPYLQDGRPVDMVFNPLGVPPRMNVGQIFECSLGLAGGLLDRHYRIAPFDERYEQEASRKLVFSELYEAGKQTANPWVFEPEYPGKSRIFDGRTGDPFEQPVIIGKPYILKLIHQVDDKIHGRSSGHYALVTQQPLRGRAKQGGQRVGEMEVWALEGFGVAHILQEMLTYKSDHIRARQEVLGTTIIGGTIPNPQDAPESFRLLVRELRSLALELNHFFVSEKNFQINRKEA.

The protein belongs to the RNA polymerase beta chain family. In terms of assembly, in plastids the minimal PEP RNA polymerase catalytic core is composed of four subunits: alpha, beta, beta', and beta''. When a (nuclear-encoded) sigma factor is associated with the core the holoenzyme is formed, which can initiate transcription.

It is found in the plastid. The protein resides in the chloroplast. The enzyme catalyses RNA(n) + a ribonucleoside 5'-triphosphate = RNA(n+1) + diphosphate. Its function is as follows. DNA-dependent RNA polymerase catalyzes the transcription of DNA into RNA using the four ribonucleoside triphosphates as substrates. The protein is DNA-directed RNA polymerase subunit beta of Panax ginseng (Korean ginseng).